We begin with the raw amino-acid sequence, 352 residues long: Ribosomal RNA large subunit methyltransferase M (352 aa).

Residues Ser187, 218 to 221 (APGG), Asp237, Asp257, and Asp273 contribute to the S-adenosyl-L-methionine site. Lys302 functions as the Proton acceptor in the catalytic mechanism.

This sequence belongs to the class I-like SAM-binding methyltransferase superfamily. RNA methyltransferase RlmE family. RlmM subfamily. In terms of assembly, monomer.

The protein resides in the cytoplasm. The catalysed reaction is cytidine(2498) in 23S rRNA + S-adenosyl-L-methionine = 2'-O-methylcytidine(2498) in 23S rRNA + S-adenosyl-L-homocysteine + H(+). Its function is as follows. Catalyzes the 2'-O-methylation at nucleotide C2498 in 23S rRNA. The chain is Ribosomal RNA large subunit methyltransferase M from Methylococcus capsulatus (strain ATCC 33009 / NCIMB 11132 / Bath).